A 461-amino-acid polypeptide reads, in one-letter code: MGVNVFGIINLEKPRKEKLEFREPFEVFKSIYSEYESSFLLESMESDTGLARYSFIGFEPEMIIRAREGVIEIDDGDSREEFDSKNPFEDLRGFLKMEKNSGGFCGGLVGYISYQAARFFDTIRLSEGDFPDFEFGLFLDGIMFNHLTGECSYISRHGNRLPDISPLLGDEVPTGTLGYRRERTLLSKRRYMDMVLEAKERIREGEIFQAVLSSATDYRLRGDRLAFYESLRRINPSPYMYHLKLGEREITGSSPEMLVRVEDRRIETFPIAGTRPRGRTEEEDGVIASDLLSDEKELAEHLMLVDLARNDIGRVSEFGSVEVPEYMTIKRFSHVQHILSHVTGKLRDGMDAVDALGAVFPAGTVSGAPKIRAMEIIESLEGVPRNAYAGALGYLSLNGNADFAITIRSMVCQGKTGRIQAGAGIVHDSIPEMEYLECQNKARALLKSMEMAGEQVDPDNR.

L-tryptophan is bound by residues Ser-43 and 238 to 240 (PYM). 273-274 (GT) lines the chorismate pocket. Glu-300 provides a ligand contact to Mg(2+). Residues Tyr-388, Arg-408, 422-424 (GAG), and Gly-424 each bind chorismate. Glu-437 contributes to the Mg(2+) binding site.

Belongs to the anthranilate synthase component I family. As to quaternary structure, heterotetramer consisting of two non-identical subunits: a beta subunit (TrpG) and a large alpha subunit (TrpE). Requires Mg(2+) as cofactor.

The enzyme catalyses chorismate + L-glutamine = anthranilate + pyruvate + L-glutamate + H(+). It functions in the pathway amino-acid biosynthesis; L-tryptophan biosynthesis; L-tryptophan from chorismate: step 1/5. With respect to regulation, feedback inhibited by tryptophan. In terms of biological role, part of a heterotetrameric complex that catalyzes the two-step biosynthesis of anthranilate, an intermediate in the biosynthesis of L-tryptophan. In the first step, the glutamine-binding beta subunit (TrpG) of anthranilate synthase (AS) provides the glutamine amidotransferase activity which generates ammonia as a substrate that, along with chorismate, is used in the second step, catalyzed by the large alpha subunit of AS (TrpE) to produce anthranilate. In the absence of TrpG, TrpE can synthesize anthranilate directly from chorismate and high concentrations of ammonia. The sequence is that of Anthranilate synthase component 1 (trpE) from Methanothermobacter marburgensis (strain ATCC BAA-927 / DSM 2133 / JCM 14651 / NBRC 100331 / OCM 82 / Marburg) (Methanobacterium thermoautotrophicum).